The primary structure comprises 316 residues: Transaldolase (316 aa).

The active-site Schiff-base intermediate with substrate is the Lys125.

Belongs to the transaldolase family. Type 1 subfamily. As to quaternary structure, homodimer.

It localises to the cytoplasm. It catalyses the reaction D-sedoheptulose 7-phosphate + D-glyceraldehyde 3-phosphate = D-erythrose 4-phosphate + beta-D-fructose 6-phosphate. Its pathway is carbohydrate degradation; pentose phosphate pathway; D-glyceraldehyde 3-phosphate and beta-D-fructose 6-phosphate from D-ribose 5-phosphate and D-xylulose 5-phosphate (non-oxidative stage): step 2/3. Its function is as follows. Transaldolase is important for the balance of metabolites in the pentose-phosphate pathway. The chain is Transaldolase from Verminephrobacter eiseniae (strain EF01-2).